Here is a 309-residue protein sequence, read N- to C-terminus: MCMLLREIITHVPCVKCGFFVIFNNVKQRFKKYILIQSLLSPSYFNITDAKSFIETYSCIYKDRPMIVWIDSPYYVEHGCDMRRAKVYVTSHYVKKLLNGTIHVDGVLRPPFNQVAYDERASNVKKEYLFTVLASEPGDGTAIRKRVKYTLDILRQLNMRNSTLVISNVGDFDMRSYTLDEREKYRLLHKSYFYLSLSKNEGFGLPLMESMSVGTPAVYVNAFAFKEYAVGIPIDPYDVIIEETSYGKMDNYLIRDSDVRNALQEARECIKTSCYDELSAKALEKSKEFEMPNIEEKILSDFKSVMRHR.

The protein belongs to the glycosyltransferase group 1 family. Glycosyltransferase 4 subfamily.

This is Putative glycosyltransferase 48 (SIFV0048) from Saccharolobus islandicus (Sulfolobus islandicus).